Here is a 559-residue protein sequence, read N- to C-terminus: Probable 2-ketoarginine decarboxylase AruI (559 aa).

Glutamate 76 contributes to the thiamine diphosphate binding site.

This sequence belongs to the TPP enzyme family. The cofactor is thiamine diphosphate.

The enzyme catalyses 5-guanidino-2-oxopentanoate + H(+) = 4-guanidinobutanal + CO2. The protein operates within amino-acid degradation; L-arginine degradation. Catalyzes the decarboxylation of 2-ketoarginine, leading to the formation of 4-guanidinobutyraldehyde. The polypeptide is Probable 2-ketoarginine decarboxylase AruI (aruI) (Pseudomonas aeruginosa (strain ATCC 15692 / DSM 22644 / CIP 104116 / JCM 14847 / LMG 12228 / 1C / PRS 101 / PAO1)).